A 62-amino-acid polypeptide reads, in one-letter code: U-myrmeciitoxin(01)-Mg3a (62 aa).

The N-terminal stretch at 1–24 is a signal peptide; that stretch reads MKTTVILLLAIAIIFAIMTTLTSA.

As to expression, expressed by the venom gland.

The protein localises to the secreted. Functionally, may have antimicrobial properties, like most ant linear peptides. This is U-myrmeciitoxin(01)-Mg3a from Myrmecia gulosa (Red bulldog ant).